Here is an 82-residue protein sequence, read N- to C-terminus: Turripeptide Gsp9.1 (82 aa).

A signal peptide spans 1 to 23 (MMAKLMITVMMVLLLSLQQGADG). Residues 24 to 46 (RSKRWRKNQMAASSIMRNLITAR) constitute a propeptide that is removed on maturation. Residues proline 49 and proline 50 each carry the 4-hydroxyproline modification. 3 disulfide bridges follow: cysteine 53/cysteine 68, cysteine 58/cysteine 72, and cysteine 64/cysteine 79. Residues glutamate 60 and glutamate 63 each carry the 4-carboxyglutamate modification.

Belongs to the Pg turripeptide superfamily. Expressed by the venom duct.

The protein localises to the secreted. The sequence is that of Turripeptide Gsp9.1 from Gemmula speciosa (Splendid gem-turris).